The following is a 227-amino-acid chain: Thymidylate kinase (227 aa).

Position 7-14 (7-14 (GIEGSGKT)) interacts with ATP.

The protein belongs to the thymidylate kinase family.

The enzyme catalyses dTMP + ATP = dTDP + ADP. Phosphorylation of dTMP to form dTDP in both de novo and salvage pathways of dTTP synthesis. In Desulforapulum autotrophicum (strain ATCC 43914 / DSM 3382 / VKM B-1955 / HRM2) (Desulfobacterium autotrophicum), this protein is Thymidylate kinase.